Here is a 466-residue protein sequence, read N- to C-terminus: Transcription factor eupR (466 aa).

Positions 1-18 (MFSTEPRSDTAPGSPSCS) are enriched in polar residues. The interval 1-22 (MFSTEPRSDTAPGSPSCSETKR) is disordered. Residues 32–62 (CWECKRRKVKCSYSNPSDPRCIGCRRRGTKC) constitute a DNA-binding region (zn(2)-C6 fungal-type).

The protein resides in the nucleus. Its function is as follows. Transcription factor; part of the gene cluster that mediates the biosynthesis of eupenifeldin, a bistropolone meroterpenoid that acts as an antitumor agent. In Phoma sp, this protein is Transcription factor eupR.